A 590-amino-acid chain; its full sequence is Complement component C8 beta chain (590 aa).

The N-terminal stretch at Met-1–Ser-32 is a signal peptide. Residues Glu-33–Arg-54 constitute a propeptide that is removed on maturation. N-linked (GlcNAc...) asparagine glycosylation is present at Asn-44. Residues Asp-64–Arg-117 enclose the TSP type-1 1 domain. 7 disulfides stabilise this stretch: Cys-65/Cys-100, Cys-76/Cys-110, Cys-79/Cys-116, Cys-122/Cys-133, Cys-127/Cys-146, Cys-140/Cys-155, and Cys-162/Cys-200. 2 C-linked (Man) tryptophan glycosylation sites follow: Trp-70 and Trp-73. Residue Asn-101 is glycosylated (N-linked (GlcNAc...) asparagine). One can recognise an LDL-receptor class A domain in the interval Val-120–Lys-157. Ca(2+)-binding residues include Leu-138, Asn-141, Asp-143, Asp-145, Asp-151, and Glu-152. Residues Ile-158–Arg-504 enclose the MACPF domain. 4 beta stranded membrane-spanning segments follow: residues Ser-252–Lys-259, Ser-262–Asn-269, Ala-379–Gly-386, and Val-392–Ser-399. Cysteines 378 and 403 form a disulfide. Thr-418 is subject to Phosphothreonine. 4 cysteine pairs are disulfide-bonded: Cys-503/Cys-550, Cys-505/Cys-521, Cys-508/Cys-523, and Cys-525/Cys-534. The EGF-like domain maps to Cys-505–Glu-535. Positions Asp-545 to Leu-588 constitute a TSP type-1 2 domain. 2 C-linked (Man) tryptophan glycosylation sites follow: Trp-551 and Trp-554. Cys-557 and Cys-590 are oxidised to a cystine. Residues Cys-557–Cys-590 form a disordered region.

It belongs to the complement C6/C7/C8/C9 family. Heterotrimer of 3 chains: alpha (C8A), beta (C8B) and gamma (C8G); the alpha and gamma chains are disulfide bonded. Component of the membrane attack complex (MAC), composed of complement C5b, C6, C7, C8A, C8B, C8G and multiple copies of the pore-forming subunit C9. N-glycosylated; contains one or two bound glycans. Not O-glycosylated.

The protein localises to the secreted. Its subcellular location is the target cell membrane. Its activity is regulated as follows. Membrane attack complex (MAC) assembly is inhibited by CD59, thereby protecting self-cells from damage during complement activation. CD59 acts by binding to the beta-haipins of C8 (C8A and C8B), forming an intermolecular beta-sheet that prevents incorporation of the multiple copies of C9 required for complete formation of the osmolytic pore. MAC assembly is also inhibited by clusterin (CLU) chaperones that inhibit polymerization of C9. Its function is as follows. Component of the membrane attack complex (MAC), a multiprotein complex activated by the complement cascade, which inserts into a target cell membrane and forms a pore, leading to target cell membrane rupture and cell lysis. The MAC is initiated by proteolytic cleavage of C5 into complement C5b in response to the classical, alternative, lectin and GZMK complement pathways. The complement pathways consist in a cascade of proteins that leads to phagocytosis and breakdown of pathogens and signaling that strengthens the adaptive immune system. C8B, together with C8A and C8G, inserts into the target membrane, but does not form pores by itself. During MAC assembly, associates with C5b, C6 and C7 to form the C5b8 intermediate complex that inserts into the target membrane and traverses the bilayer increasing membrane rigidity. The chain is Complement component C8 beta chain (C8B) from Oryctolagus cuniculus (Rabbit).